A 359-amino-acid polypeptide reads, in one-letter code: Histidinol-phosphate aminotransferase (359 aa).

Lysine 217 is modified (N6-(pyridoxal phosphate)lysine).

Belongs to the class-II pyridoxal-phosphate-dependent aminotransferase family. Histidinol-phosphate aminotransferase subfamily. As to quaternary structure, homodimer. It depends on pyridoxal 5'-phosphate as a cofactor.

The enzyme catalyses L-histidinol phosphate + 2-oxoglutarate = 3-(imidazol-4-yl)-2-oxopropyl phosphate + L-glutamate. The protein operates within amino-acid biosynthesis; L-histidine biosynthesis; L-histidine from 5-phospho-alpha-D-ribose 1-diphosphate: step 7/9. The sequence is that of Histidinol-phosphate aminotransferase from Salmonella choleraesuis (strain SC-B67).